A 233-amino-acid polypeptide reads, in one-letter code: Octanoyltransferase (233 aa).

The region spanning 34–214 (GQAPSTVLLL…EFSAREATLI (181 aa)) is the BPL/LPL catalytic domain. Substrate is bound by residues 72-79 (RGGKLTWH), 144-146 (AIG), and 157-159 (GFS). C175 acts as the Acyl-thioester intermediate in catalysis.

This sequence belongs to the LipB family.

Its subcellular location is the cytoplasm. It carries out the reaction octanoyl-[ACP] + L-lysyl-[protein] = N(6)-octanoyl-L-lysyl-[protein] + holo-[ACP] + H(+). It functions in the pathway protein modification; protein lipoylation via endogenous pathway; protein N(6)-(lipoyl)lysine from octanoyl-[acyl-carrier-protein]: step 1/2. Catalyzes the transfer of endogenously produced octanoic acid from octanoyl-acyl-carrier-protein onto the lipoyl domains of lipoate-dependent enzymes. Lipoyl-ACP can also act as a substrate although octanoyl-ACP is likely to be the physiological substrate. This chain is Octanoyltransferase, found in Renibacterium salmoninarum (strain ATCC 33209 / DSM 20767 / JCM 11484 / NBRC 15589 / NCIMB 2235).